Here is a 400-residue protein sequence, read N- to C-terminus: Acetylornithine aminotransferase (400 aa).

Pyridoxal 5'-phosphate is bound by residues 102–103 and F135; that span reads GA. R138 contributes to the N(2)-acetyl-L-ornithine binding site. 220-223 serves as a coordination point for pyridoxal 5'-phosphate; that stretch reads DEVQ. K249 bears the N6-(pyridoxal phosphate)lysine mark. S276 contributes to the N(2)-acetyl-L-ornithine binding site. T277 provides a ligand contact to pyridoxal 5'-phosphate.

The protein belongs to the class-III pyridoxal-phosphate-dependent aminotransferase family. ArgD subfamily. As to quaternary structure, homodimer. Pyridoxal 5'-phosphate serves as cofactor.

It localises to the cytoplasm. The catalysed reaction is N(2)-acetyl-L-ornithine + 2-oxoglutarate = N-acetyl-L-glutamate 5-semialdehyde + L-glutamate. It functions in the pathway amino-acid biosynthesis; L-arginine biosynthesis; N(2)-acetyl-L-ornithine from L-glutamate: step 4/4. The chain is Acetylornithine aminotransferase from Gloeobacter violaceus (strain ATCC 29082 / PCC 7421).